The sequence spans 250 residues: Anamorsin homolog 1 (250 aa).

The segment at 1–104 is N-terminal SAM-like domain; it reads MNLKITINQQ…KKLNIPQQEF (104 aa). The linker stretch occupies residues 104–149; sequence FNNCYGKYDYIEQKFQNQINFFKQVDINGKQEIIDENELLDDGVQV. Residues cysteine 155, cysteine 162, cysteine 165, and cysteine 167 each coordinate [2Fe-2S] cluster. The tract at residues 155-167 is fe-S binding site A; sequence CASKPRACANCTC. 4 residues coordinate [4Fe-4S] cluster: cysteine 193, cysteine 196, cysteine 204, and cysteine 207. Short sequence motifs (cx2C motif) lie at residues 193–196 and 204–207; these read CGSC and CANC. The interval 193–207 is fe-S binding site B; that stretch reads CGSCYLGDAFRCANC.

The protein belongs to the anamorsin family. As to quaternary structure, monomer. [2Fe-2S] cluster serves as cofactor. Requires [4Fe-4S] cluster as cofactor.

Its subcellular location is the cytoplasm. It localises to the mitochondrion intermembrane space. Functionally, component of the cytosolic iron-sulfur (Fe-S) protein assembly (CIA) machinery. Required for the maturation of extramitochondrial Fe-S proteins. Part of an electron transfer chain functioning in an early step of cytosolic Fe-S biogenesis, facilitating the de novo assembly of a [4Fe-4S] cluster on the cytosolic Fe-S scaffold complex. Electrons are transferred from NADPH via a FAD- and FMN-containing diflavin oxidoreductase. Together with the diflavin oxidoreductase, also required for the assembly of the diferric tyrosyl radical cofactor of ribonucleotide reductase (RNR), probably by providing electrons for reduction during radical cofactor maturation in the catalytic small subunit. In Paramecium tetraurelia, this protein is Anamorsin homolog 1.